The following is a 389-amino-acid chain: Glycerol-3-phosphate dehydrogenase [NAD(+)] 2 (389 aa).

NAD(+)-binding positions include 40–45 (GSGNWG), Phe128, Lys151, and Ala184. Residue Lys151 participates in substrate binding. Catalysis depends on Lys244, which acts as the Proton acceptor. Positions 309 and 338 each coordinate NAD(+). 309–310 (RN) lines the substrate pocket.

Belongs to the NAD-dependent glycerol-3-phosphate dehydrogenase family.

It is found in the cytoplasm. The enzyme catalyses sn-glycerol 3-phosphate + NAD(+) = dihydroxyacetone phosphate + NADH + H(+). In Zygosaccharomyces rouxii, this protein is Glycerol-3-phosphate dehydrogenase [NAD(+)] 2 (GPD2).